The following is a 389-amino-acid chain: Putative glutamate--cysteine ligase 2 (389 aa).

This sequence belongs to the glutamate--cysteine ligase type 2 family. YbdK subfamily.

It catalyses the reaction L-cysteine + L-glutamate + ATP = gamma-L-glutamyl-L-cysteine + ADP + phosphate + H(+). Functionally, ATP-dependent carboxylate-amine ligase which exhibits weak glutamate--cysteine ligase activity. In Rhodospirillum rubrum (strain ATCC 11170 / ATH 1.1.1 / DSM 467 / LMG 4362 / NCIMB 8255 / S1), this protein is Putative glutamate--cysteine ligase 2.